The primary structure comprises 187 residues: Adenylate kinase (187 aa).

10–15 (GSGKGT) lines the ATP pocket. The segment at 30-59 (STGDMLRAEIAAGSELGKQAKAVMDAGNLV) is NMP. Residues threonine 31, arginine 36, 57–59 (NLV), 85–88 (GYPR), and glutamine 92 each bind AMP. An LID region spans residues 126–136 (GRAKEQGRADD). Residue arginine 127 participates in ATP binding. Arginine 133 and arginine 144 together coordinate AMP. Residue glycine 172 coordinates ATP.

This sequence belongs to the adenylate kinase family. Monomer.

It is found in the cytoplasm. It carries out the reaction AMP + ATP = 2 ADP. It participates in purine metabolism; AMP biosynthesis via salvage pathway; AMP from ADP: step 1/1. Its function is as follows. Catalyzes the reversible transfer of the terminal phosphate group between ATP and AMP. Plays an important role in cellular energy homeostasis and in adenine nucleotide metabolism. The protein is Adenylate kinase of Stenotrophomonas maltophilia (strain R551-3).